Reading from the N-terminus, the 401-residue chain is 26S proteasome regulatory subunit 6A (401 aa).

Residue 189–196 (GPPGTGKT) participates in ATP binding.

The protein belongs to the AAA ATPase family. As to quaternary structure, the 26S proteasome consists of a 20S proteasome core and two 19S regulatory subunits. The 20S proteasome core is composed of 28 subunits that are arranged in four stacked rings, resulting in a barrel-shaped structure. The two end rings are each formed by seven alpha subunits, and the two central rings are each formed by seven beta subunits. The catalytic chamber with the active sites is on the inside of the barrel.

Its subcellular location is the cytoplasm. It localises to the nucleus. Functionally, acts as a regulatory subunit of the 26S proteasome which degrades poly-ubiquitinated proteins in the cytoplasm and in the nucleus. It is essential for the regulated turnover of proteins and for the removal of misfolded proteins. The proteasome is a multicatalytic proteinase complex that is characterized by its ability to cleave peptides with Arg, Phe, Tyr, Leu, and Glu adjacent to the leaving group at neutral or slightly basic pH. The chain is 26S proteasome regulatory subunit 6A (RPT5) from Encephalitozoon cuniculi (strain GB-M1) (Microsporidian parasite).